The sequence spans 149 residues: Succinate dehydrogenase assembly factor 2, mitochondrial (149 aa).

Belongs to the SDHAF2 family. As to quaternary structure, interacts with the flavoprotein subunit within the SDH catalytic dimer.

The protein localises to the mitochondrion matrix. In terms of biological role, plays an essential role in the assembly of succinate dehydrogenase (SDH), an enzyme complex (also referred to as respiratory complex II) that is a component of both the tricarboxylic acid (TCA) cycle and the mitochondrial electron transport chain, and which couples the oxidation of succinate to fumarate with the reduction of ubiquinone (coenzyme Q) to ubiquinol. Required for flavinylation (covalent attachment of FAD) of the flavoprotein subunit of the SDH catalytic dimer. This chain is Succinate dehydrogenase assembly factor 2, mitochondrial, found in Scheffersomyces stipitis (strain ATCC 58785 / CBS 6054 / NBRC 10063 / NRRL Y-11545) (Yeast).